The chain runs to 519 residues: Protein nucleotidyltransferase YdiU (519 aa).

The ATP site is built by Gly101, Gly103, Arg104, Lys123, Asp135, Gly136, Arg193, and Arg200. Catalysis depends on Asp271, which acts as the Proton acceptor. Residues Asn272 and Asp281 each contribute to the Mg(2+) site. Asp281 is an ATP binding site.

This sequence belongs to the SELO family. Mg(2+) is required as a cofactor. The cofactor is Mn(2+).

The catalysed reaction is L-seryl-[protein] + ATP = 3-O-(5'-adenylyl)-L-seryl-[protein] + diphosphate. It carries out the reaction L-threonyl-[protein] + ATP = 3-O-(5'-adenylyl)-L-threonyl-[protein] + diphosphate. The enzyme catalyses L-tyrosyl-[protein] + ATP = O-(5'-adenylyl)-L-tyrosyl-[protein] + diphosphate. It catalyses the reaction L-histidyl-[protein] + UTP = N(tele)-(5'-uridylyl)-L-histidyl-[protein] + diphosphate. The catalysed reaction is L-seryl-[protein] + UTP = O-(5'-uridylyl)-L-seryl-[protein] + diphosphate. It carries out the reaction L-tyrosyl-[protein] + UTP = O-(5'-uridylyl)-L-tyrosyl-[protein] + diphosphate. In terms of biological role, nucleotidyltransferase involved in the post-translational modification of proteins. It can catalyze the addition of adenosine monophosphate (AMP) or uridine monophosphate (UMP) to a protein, resulting in modifications known as AMPylation and UMPylation. This is Protein nucleotidyltransferase YdiU from Tolumonas auensis (strain DSM 9187 / NBRC 110442 / TA 4).